A 149-amino-acid polypeptide reads, in one-letter code: Transcriptional repressor NrdR (149 aa).

Residues 3–34 fold into a zinc finger; it reads CPFCTAEETKVIDSRLAADGYQIRRRRECIGC. Residues 49–139 form the ATP-cone domain; that stretch reads PYIIKNNGNR…VYLSFDDIEE (91 aa).

Belongs to the NrdR family. Zn(2+) serves as cofactor.

Negatively regulates transcription of bacterial ribonucleotide reductase nrd genes and operons by binding to NrdR-boxes. The sequence is that of Transcriptional repressor NrdR from Haemophilus ducreyi (strain 35000HP / ATCC 700724).